We begin with the raw amino-acid sequence, 145 residues long: uncharacterized protein (145 aa).

This is an uncharacterized protein from Bacillus anthracis.